We begin with the raw amino-acid sequence, 304 residues long: Energy-coupling factor transporter ATP-binding protein EcfA2 (304 aa).

The ABC transporter domain occupies 3-261 (IIVKNISYIY…EKFLVENKLK (259 aa)). Position 40–47 (40–47 (GSTGSGKT)) interacts with ATP.

This sequence belongs to the ABC transporter superfamily. Energy-coupling factor EcfA family. In terms of assembly, forms a stable energy-coupling factor (ECF) transporter complex composed of 2 membrane-embedded substrate-binding proteins (S component), 2 ATP-binding proteins (A component) and 2 transmembrane proteins (T component).

Its subcellular location is the cell membrane. In terms of biological role, ATP-binding (A) component of a common energy-coupling factor (ECF) ABC-transporter complex. Unlike classic ABC transporters this ECF transporter provides the energy necessary to transport a number of different substrates. The polypeptide is Energy-coupling factor transporter ATP-binding protein EcfA2 (Mycoplasmopsis pulmonis (strain UAB CTIP) (Mycoplasma pulmonis)).